A 125-amino-acid polypeptide reads, in one-letter code: Protein ELF4-LIKE 1 (125 aa).

Residues M1–M18 show a composition bias toward polar residues. The tract at residues M1 to A28 is disordered.

The protein belongs to the EARLY FLOWERING 4 family. As to quaternary structure, homodimer.

The protein resides in the nucleus. Component of the central CCA1/LHY-TOC1 feedback loop in the circadian clock that promotes clock accuracy and is required for sustained rhythms in the absence of daily light/dark cycles. This is Protein ELF4-LIKE 1 (EFL1) from Arabidopsis thaliana (Mouse-ear cress).